Reading from the N-terminus, the 903-residue chain is MGKFEDDGNSESVPLTRQRSESLASQTSTDSGLSIASESFMKNHKGGNTMPTDGGDGDRYLDVEDGGETGLDEPLISSGTKTGSSSRLRKIVWLLVLLCVGGWVLSFVLFLTQKRPDTAALSSASTVEIHEPGPATGGTSHGKPVTLEQVLSGTWSPKSHAISWIAGPDGEDGLLVEQGEKQDAFLRVKDIRSSEDGVDNLETRVLMKKGYIWFDGEAMLSAKTWPSPDMNRVLVMTDIQSNWRHSYFGKYWILDVATQKAEPLDPGNLSGRVQLAAWSPTSDAVVFVRENNLYLRKLTSLEVTPITKDGDENLFYGVPDWVYEEEVFSGNTGTWWSDDGKFVAFLRTNETAVPEYPIQYFRSRPSGKQPPPGLENYPEVRQIKYPKPGSPNPIVNLQFYDVEKNEVFSFEMPEDFVDDERIIIEVVWASEGKVLIRETNRESDVVKIFVMDTKARTGKLVRSDDIAALDGGWVEPTQSTRVIPADPKNGRPHDGYVDTVIYEGYDHLAYFTPFDNPEPVMLTKGNWEVVNAPSAVDLKKGLVYFVATKEAPTQRHVYSVKLDGSDLRPLTDTSAPGFFDVSFSHGAGYGLLSYKGPAVPWQAVINTQGDEIDFINLIEENVELAKMVEESAIPTEVYSNVTIDGYTLQVLERRPPNFNPEKKYPVLFFLYGGPGSQTVDRKFTIDFQTYVASNLGYIVVTVDGRGTGFIGREARCLVRGNIGHYEAIDQIETAKIWASKSYVDESRMAVWGWSYGGYMTLKVLEQDAGETFQYGMAVAPVTDWRFYDSIYTERYMHTPEHNPSGYANASIDDVMALGHSVRFLIMHGVADDNVHLQNTLVLIDKLDLKNIDNYDMQVFPDSDHSIQFHMAHALVYERLSSWLINAFNGEWHRTANPKPQEST.

Residues 1–83 (MGKFEDDGNS…PLISSGTKTG (83 aa)) are disordered. The Cytoplasmic portion of the chain corresponds to 1–90 (MGKFEDDGNS…KTGSSSRLRK (90 aa)). Over residues 10 to 37 (SESVPLTRQRSESLASQTSTDSGLSIAS) the composition is skewed to polar residues. The helical; Signal-anchor for type II membrane protein transmembrane segment at 91–111 (IVWLLVLLCVGGWVLSFVLFL) threads the bilayer. The Vacuolar segment spans residues 112–903 (TQKRPDTAAL…TANPKPQEST (792 aa)). The segment at 121–143 (LSSASTVEIHEPGPATGGTSHGK) is disordered. N-linked (GlcNAc...) asparagine glycans are attached at residues Asn268, Asn349, and Asn640. The active-site Charge relay system is the Ser754. Asn808 is a glycosylation site (N-linked (GlcNAc...) asparagine). Active-site charge relay system residues include Asp831 and His864.

Belongs to the peptidase S9B family.

It is found in the vacuole membrane. The catalysed reaction is Release of an N-terminal dipeptide, Xaa-Yaa-|-Zaa-, from a polypeptide, preferentially when Yaa is Pro, provided Zaa is neither Pro nor hydroxyproline.. Functionally, type IV dipeptidyl-peptidase which removes N-terminal dipeptides sequentially from polypeptides having unsubstituted N-termini provided that the penultimate residue is proline. This Penicillium rubens (strain ATCC 28089 / DSM 1075 / NRRL 1951 / Wisconsin 54-1255) (Penicillium chrysogenum) protein is Probable dipeptidyl-aminopeptidase B (dapB).